We begin with the raw amino-acid sequence, 102 residues long: Carboxysome shell protein CcmK2 (102 aa).

In terms of domain architecture, BMC spans 4 to 90 (AVGMIETRGF…PHENLEYVLP (87 aa)).

It belongs to the bacterial microcompartments protein family. CcmK subfamily. In terms of assembly, homohexamer. Stacked hexamers, with the concave faces together, have also been crystallized. Interacts preferentially with itself, then with CcmK1 and CcmK4a in vitro. May interact with CcmL, this occurs at very high CcmK2 concentrations. Interacts with CcmN and CcmO in the carboxysome.

It localises to the carboxysome. Its function is as follows. Probably the major shell protein of the carboxysome, a polyhedral inclusion where RuBisCO (ribulose bisphosphate carboxylase, rbcL-rbcS) is sequestered. Assembles into hexamers which make sheets that form the facets of the polyhedral carboxysome. The hexamer central pore probably regulates metabolite flux. This is Carboxysome shell protein CcmK2 from Thermosynechococcus vestitus (strain NIES-2133 / IAM M-273 / BP-1).